The chain runs to 242 residues: Lactate utilization protein A 2 (242 aa).

The protein belongs to the LutA/YkgE family.

Is involved in L-lactate degradation and allows cells to grow with lactate as the sole carbon source. The protein is Lactate utilization protein A 2 of Bacillus cereus (strain 03BB102).